The chain runs to 465 residues: ATP synthase subunit beta (465 aa).

152–159 serves as a coordination point for ATP; it reads GGAGVGKT.

The protein belongs to the ATPase alpha/beta chains family. In terms of assembly, F-type ATPases have 2 components, CF(1) - the catalytic core - and CF(0) - the membrane proton channel. CF(1) has five subunits: alpha(3), beta(3), gamma(1), delta(1), epsilon(1). CF(0) has three main subunits: a(1), b(2) and c(9-12). The alpha and beta chains form an alternating ring which encloses part of the gamma chain. CF(1) is attached to CF(0) by a central stalk formed by the gamma and epsilon chains, while a peripheral stalk is formed by the delta and b chains.

The protein resides in the cell inner membrane. The catalysed reaction is ATP + H2O + 4 H(+)(in) = ADP + phosphate + 5 H(+)(out). In terms of biological role, produces ATP from ADP in the presence of a proton gradient across the membrane. The catalytic sites are hosted primarily by the beta subunits. The polypeptide is ATP synthase subunit beta (Campylobacter concisus (strain 13826)).